The sequence spans 365 residues: A-type ATP synthase subunit C (365 aa).

It belongs to the V-ATPase V0D/AC39 subunit family. Has multiple subunits with at least A(3), B(3), C, D, E, F, H, I and proteolipid K(x).

The protein resides in the cell membrane. Its function is as follows. Component of the A-type ATP synthase that produces ATP from ADP in the presence of a proton gradient across the membrane. The polypeptide is A-type ATP synthase subunit C (Thermococcus kodakarensis (strain ATCC BAA-918 / JCM 12380 / KOD1) (Pyrococcus kodakaraensis (strain KOD1))).